The chain runs to 536 residues: MILLSFVSDSNVGTGEKKVTEAWISEDENSHRTTSDRLTVMELPSPESEEVHEPRLGELLGNPEGQSLGSSPSQDRGCKQVTVTHWKIQTGETAQVCTKSGRNHILNSDLLLLQRELIEGEANPCDICGKTFTFNSDLVRHRISHAGEKPYTCDQCGKGFGQSSHLMEHQRIHTGERLYVCNVCGKDFIHYSGLIEHQRVHSGEKPFKCAQCGKAFCHSSDLIRHQRVHTRERPFECKECGKGFSQSSLLIRHQRIHTGERPYECNECGKSFIRSSSLIRHYQIHTEVKQYECKECGKAFRHRSDLIEHQRIHTGERPFECNECGKAFIRSSKLIQHQRIHTGERPYVCNECGKRFSQTSNFTQHQRIHTGEKLYECNECGKAFFLSSYLIRHQKIHTGERVYECKECGKAFLQKAHLTEHQKIHSGDRPFECKDCGKAFIQSSKLLLHQIIHTGEKPYVCSYCGKGFIQRSNFLQHQKIHTEEKLYECSQYGRDFNSTTNVKNNQRVHQEGLSLSKAPIHLGERSVDKGEHTGNL.

The disordered stretch occupies residues 57–77 (GELLGNPEGQSLGSSPSQDRG). Over residues 64 to 74 (EGQSLGSSPSQ) the composition is skewed to polar residues. 13 C2H2-type zinc fingers span residues 123–145 (NPCD…RISH), 151–173 (YTCD…QRIH), 179–201 (YVCN…QRVH), 207–229 (FKCA…QRVH), 235–257 (FECK…QRIH), 263–285 (YECN…YQIH), 291–313 (YECK…QRIH), 319–341 (FECN…QRIH), 347–369 (YVCN…QRIH), 375–397 (YECN…QKIH), 403–425 (YECK…QKIH), 431–453 (FECK…QIIH), and 459–481 (YVCS…QKIH). A Glycyl lysine isopeptide (Lys-Gly) (interchain with G-Cter in SUMO2) cross-link involves residue Lys445. The disordered stretch occupies residues 513 to 536 (LSLSKAPIHLGERSVDKGEHTGNL). A compositionally biased stretch (basic and acidic residues) spans 522 to 536 (LGERSVDKGEHTGNL).

It belongs to the krueppel C2H2-type zinc-finger protein family.

It is found in the nucleus. May be involved in transcriptional regulation. This is Zinc finger protein 623 (ZNF623) from Homo sapiens (Human).